Reading from the N-terminus, the 223-residue chain is Fibronectin type III domain-containing protein 10 (223 aa).

Positions 1-19 are cleaved as a signal peptide; the sequence is MRAPPLLLLLAACAPPSGA. At 20 to 179 the chain is on the extracellular side; sequence AVDPTPPGWE…FTAEPAAMQE (160 aa). The Fibronectin type-III domain occupies 72-168; that stretch reads LASAGGSLRA…VVPPELAECV (97 aa). N86 and N109 each carry an N-linked (GlcNAc...) asparagine glycan. The chain crosses the membrane as a helical span at residues 180 to 200; the sequence is IVVAMTAVGGSICVMLVVICL. At 201–223 the chain is on the cytoplasmic side; sequence LVAYITENLMHPTFRRPSLRRQP.

The protein localises to the membrane. The polypeptide is Fibronectin type III domain-containing protein 10 (Fndc10) (Mus musculus (Mouse)).